The following is a 167-amino-acid chain: C-X-C motif chemokine 15 (167 aa).

Residues 1 to 25 (MAAQGWSMLLLAVLNLGIFVRPCDT) form the signal peptide. 2 cysteine pairs are disulfide-bonded: Cys-30-Cys-57 and Cys-32-Cys-73. Ser-157 is subject to Phosphoserine.

The protein belongs to the intercrine alpha (chemokine CxC) family. Expression restricted to the lung, produced by bronchoepithelial cells and is released into the airways. Expressed at low levels in fetal lung.

The protein resides in the secreted. Functionally, chemotactic for neutrophils. Involved in lung-specific neutrophil trafficking during normal and inflammatory conditions. The protein is C-X-C motif chemokine 15 (Cxcl15) of Mus musculus (Mouse).